Consider the following 301-residue polypeptide: Protoheme IX farnesyltransferase (301 aa).

The next 9 helical transmembrane spans lie at 34 to 54, 55 to 75, 102 to 121, 125 to 144, 152 to 172, 181 to 201, 222 to 242, 247 to 267, and 280 to 300; these read LVVFTAITGMLIAPGTIHPLI, GLVSTVCVALGAGAAGAFNMW, AWECGMVLATLSVFVMAIAV, SALLLAGSIFSYAVVYTMLL, IVIGGIAGAFPPVIGWASVSG, LFAIIFVWTPPHFWAIALLTL, SHILLYSIILAVVGATPGLFV, LYEILATGLSATFIAYAIAVF, and GLFKYSIYYLFLLFAVVIACV.

Belongs to the UbiA prenyltransferase family. Protoheme IX farnesyltransferase subfamily.

The protein resides in the cell inner membrane. It catalyses the reaction heme b + (2E,6E)-farnesyl diphosphate + H2O = Fe(II)-heme o + diphosphate. It functions in the pathway porphyrin-containing compound metabolism; heme O biosynthesis; heme O from protoheme: step 1/1. Its function is as follows. Converts heme B (protoheme IX) to heme O by substitution of the vinyl group on carbon 2 of heme B porphyrin ring with a hydroxyethyl farnesyl side group. This Anaplasma marginale (strain Florida) protein is Protoheme IX farnesyltransferase.